A 254-amino-acid chain; its full sequence is Probable phosphatase Sbal_1472 (254 aa).

The Zn(2+) site is built by His8, His10, His16, His41, Glu74, His102, His132, Asp193, and His195.

The protein belongs to the PHP family. The cofactor is Zn(2+).

The chain is Probable phosphatase Sbal_1472 from Shewanella baltica (strain OS155 / ATCC BAA-1091).